The following is a 410-amino-acid chain: ORC1-type DNA replication protein 2 (410 aa).

Residues 60–65, Tyr-213, and Arg-225 each bind ATP; that span reads GIGKTT.

Belongs to the CDC6/cdc18 family.

Its function is as follows. Involved in regulation of DNA replication. Binds DNA. This chain is ORC1-type DNA replication protein 2 (orc2), found in Aeropyrum pernix (strain ATCC 700893 / DSM 11879 / JCM 9820 / NBRC 100138 / K1).